The sequence spans 348 residues: Spermatogenesis-associated protein 32 (348 aa).

A compositionally biased stretch (basic and acidic residues) spans 27-36 (YHHHHHPLED). The tract at residues 27 to 61 (YHHHHHPLEDNKDEDNEMGTELSSMKPPPKVDPDP) is disordered. 2 positions are modified to phosphoserine: Ser149 and Ser152. Positions 308–329 (APATSPELQEDKDDSVPGTKKG) are disordered. Phosphothreonine is present on Thr330.

Interacts with syntaxin-1 and ACTB. In terms of tissue distribution, abundantly expressed in testes. Expressed in germ cells, but not in Sertoli or Leydig cells of the adult testis. Localized at the acrosomal region of the round and elongated spermatids at stages VIII-X.

This chain is Spermatogenesis-associated protein 32 (Spata32), found in Rattus norvegicus (Rat).